Consider the following 268-residue polypeptide: Imidazole glycerol phosphate synthase subunit HisF (268 aa).

Active-site residues include Asp-12 and Asp-131.

Belongs to the HisA/HisF family. In terms of assembly, heterodimer of HisH and HisF.

It localises to the cytoplasm. The catalysed reaction is 5-[(5-phospho-1-deoxy-D-ribulos-1-ylimino)methylamino]-1-(5-phospho-beta-D-ribosyl)imidazole-4-carboxamide + L-glutamine = D-erythro-1-(imidazol-4-yl)glycerol 3-phosphate + 5-amino-1-(5-phospho-beta-D-ribosyl)imidazole-4-carboxamide + L-glutamate + H(+). Its pathway is amino-acid biosynthesis; L-histidine biosynthesis; L-histidine from 5-phospho-alpha-D-ribose 1-diphosphate: step 5/9. Functionally, IGPS catalyzes the conversion of PRFAR and glutamine to IGP, AICAR and glutamate. The HisF subunit catalyzes the cyclization activity that produces IGP and AICAR from PRFAR using the ammonia provided by the HisH subunit. The protein is Imidazole glycerol phosphate synthase subunit HisF of Methanoculleus marisnigri (strain ATCC 35101 / DSM 1498 / JR1).